The sequence spans 140 residues: Calcitonin (140 aa).

The first 25 residues, 1-25 (MGFWKFSPFLPLSILVLYQVGIIQA), serve as a signal peptide directing secretion. Positions 26–81 (APFRSALESLPDPAVLPEEESRLLLAALVKDYVQMKVRALEQEQETGGASLDSPRA) are excised as a propeptide. Cysteine 84 and cysteine 90 are joined by a disulfide. Proline 115 is modified (proline amide). The propeptide occupies 120 to 140 (VMARGLERDHGPHIGTSQDAY).

This sequence belongs to the calcitonin family.

It localises to the secreted. Calcitonin is a peptide hormone that causes a rapid but short-lived drop in the level of calcium and phosphate in blood by promoting the incorporation of those ions in the bones. Calcitonin function is mediated by the calcitonin receptor/CALCR and the CALCR-RAMP2 (AMYR2) receptor complex. This is Calcitonin (CALCA) from Equus caballus (Horse).